A 268-amino-acid chain; its full sequence is Purine nucleoside phosphorylase (268 aa).

Phosphate contacts are provided by residues Ser-36, His-68, Arg-88–His-90, and Ala-120. A purine D-ribonucleoside is bound at residue Glu-189. Ser-208 contacts phosphate. Asn-231 is a binding site for a purine D-ribonucleoside.

Belongs to the PNP/MTAP phosphorylase family. Homotrimer.

The enzyme catalyses a purine 2'-deoxy-D-ribonucleoside + phosphate = a purine nucleobase + 2-deoxy-alpha-D-ribose 1-phosphate. It participates in purine metabolism; purine nucleoside salvage. Its function is as follows. The purine nucleoside phosphorylases catalyze the phosphorolytic breakdown of the N-glycosidic bond in the beta-(deoxy)ribonucleoside molecules, with the formation of the corresponding free purine bases and pentose-1-phosphate. Cleaves guanosine, inosine, 2'-deoxyguanosine and 2'-deoxyinosine. This is Purine nucleoside phosphorylase (punA) from Mycobacterium leprae (strain TN).